Here is a 569-residue protein sequence, read N- to C-terminus: Mitogen-activated protein kinase 8 (569 aa).

Residues 13–304 enclose the Protein kinase domain; it reads YKIQEVIGKG…AEEALADPYF (292 aa). Residues 19–27 and Lys42 contribute to the ATP site; that span reads IGKGSYGVV. Asp139 acts as the Proton acceptor in catalysis. The residue at position 175 (Thr175) is a Phosphothreonine. Residues 175–177 carry the TXY motif; it reads TDY. Tyr177 is subject to Phosphotyrosine. A disordered region spans residues 404–432; the sequence is TTVHSAPIPPKDHQNITSQVPQRIPGRTG.

It belongs to the protein kinase superfamily. CMGC Ser/Thr protein kinase family. MAP kinase subfamily. In terms of processing, dually phosphorylated on Thr-175 and Tyr-177, which activates the enzyme. In terms of tissue distribution, expressed in leaves and panicles.

The catalysed reaction is L-seryl-[protein] + ATP = O-phospho-L-seryl-[protein] + ADP + H(+). It catalyses the reaction L-threonyl-[protein] + ATP = O-phospho-L-threonyl-[protein] + ADP + H(+). Its activity is regulated as follows. Activated by threonine and tyrosine phosphorylation. This chain is Mitogen-activated protein kinase 8 (MPK8), found in Oryza sativa subsp. japonica (Rice).